We begin with the raw amino-acid sequence, 365 residues long: S-adenosylmethionine:tRNA ribosyltransferase-isomerase (365 aa).

Belongs to the QueA family. In terms of assembly, monomer.

The protein resides in the cytoplasm. The enzyme catalyses 7-aminomethyl-7-carbaguanosine(34) in tRNA + S-adenosyl-L-methionine = epoxyqueuosine(34) in tRNA + adenine + L-methionine + 2 H(+). Its pathway is tRNA modification; tRNA-queuosine biosynthesis. In terms of biological role, transfers and isomerizes the ribose moiety from AdoMet to the 7-aminomethyl group of 7-deazaguanine (preQ1-tRNA) to give epoxyqueuosine (oQ-tRNA). The chain is S-adenosylmethionine:tRNA ribosyltransferase-isomerase from Rickettsia rickettsii (strain Iowa).